Consider the following 122-residue polypeptide: Large ribosomal subunit protein uL14 (122 aa).

The protein belongs to the universal ribosomal protein uL14 family. As to quaternary structure, part of the 50S ribosomal subunit. Forms a cluster with proteins L3 and L19. In the 70S ribosome, L14 and L19 interact and together make contacts with the 16S rRNA in bridges B5 and B8.

Functionally, binds to 23S rRNA. Forms part of two intersubunit bridges in the 70S ribosome. In Leptothrix cholodnii (strain ATCC 51168 / LMG 8142 / SP-6) (Leptothrix discophora (strain SP-6)), this protein is Large ribosomal subunit protein uL14.